The chain runs to 405 residues: S-adenosylmethionine sensor upstream of mTORC1 (405 aa).

Residues 1–34 form a disordered region; the sequence is MEPGAGGRNTARAQRAGSPNTPPPREQERKLEQE. Residues 25-34 are compositionally biased toward basic and acidic residues; it reads REQERKLEQE. The S-adenosyl-L-methionine site is built by Arg95, Gly172, Asp190, Asp202, Phe203, and Ser244.

The protein belongs to the BMT2/SAMTOR family. Interacts with the DEPDC5 subunit of the GATOR1 complex; interaction is disrupted when SAMTOR binds S-adenosyl-L-methionine. Interacts with the KICSTOR complex; interaction is disrupted when SAMTOR binds S-adenosyl-L-methionine.

Functionally, S-adenosyl-L-methionine-binding protein that acts as an inhibitor of mTORC1 signaling via interaction with the GATOR1 and KICSTOR complexes. Acts as a sensor of S-adenosyl-L-methionine to signal methionine sufficiency to mTORC1: in presence of methionine, binds S-adenosyl-L-methionine, leading to disrupt interaction with the GATOR1 and KICSTOR complexes and promote mTORC1 signaling. Upon methionine starvation, S-adenosyl-L-methionine levels are reduced, thereby promoting the association with GATOR1 and KICSTOR, leading to inhibit mTORC1 signaling. Probably also acts as a S-adenosyl-L-methionine-dependent methyltransferase (Potential). The protein is S-adenosylmethionine sensor upstream of mTORC1 of Homo sapiens (Human).